The sequence spans 466 residues: Glutamate decarboxylase beta (466 aa).

Substrate-binding residues include Thr62 and Asn83. Residues 126–127 (SS), Thr212, and His275 each bind pyridoxal 5'-phosphate. Residue Lys276 is modified to N6-(pyridoxal phosphate)lysine. Residues Lys446, Lys453, and Lys464 each carry the N6-acetyllysine modification.

The protein belongs to the group II decarboxylase family. Homohexamer composed of three dimers. Requires pyridoxal 5'-phosphate as cofactor.

The enzyme catalyses L-glutamate + H(+) = 4-aminobutanoate + CO2. Functionally, converts glutamate to gamma-aminobutyrate (GABA), consuming one intracellular proton in the reaction. The gad system helps to maintain a near-neutral intracellular pH when cells are exposed to extremely acidic conditions. The ability to survive transit through the acidic conditions of the stomach is essential for successful colonization of the mammalian host by commensal and pathogenic bacteria. This Shigella flexneri protein is Glutamate decarboxylase beta (gadB).